The sequence spans 1061 residues: MKRMLINATQQEELRVALVDGQRLYDLDIESPGHEQKKANIYKGKITRIEPSLEAAFVDYGAERHGFLPLKEIAREYFPANYSAHGRPNIKDVLREGQEVIVQIDKEERGNKGAALTTFISLAGSYLVLMPNNPRAGGISRRIEGDDRTELKEALASLELPEGMGLIVRTAGVGKSAEALQWDLSFRLKHWEAIKKAAESRPAPFLIHQESNVIVRAFRDYLRQDIGEILIDNPKVLELARQHIAALGRPDFSSKIKLYTGEIPLFSHYQIESQIESAFQREVRLPSGGSIVIDSTEALTAIDINSARATRGGDIEETAFNTNLEAADEIARQLRLRDLGGLIVIDFIDMTPVRHQRAVENRLREAVRQDRARIQISHISRFGLLEMSRQRLSPSLGESSHHVCPRCSGTGTVRDNESLSLSILRLIEEEALKENTQEVHAIVPVPIASYLLNEKRSAVNAIETRQDGVRCVIVPNDQMETPHYHVLRVRKGEETPTLSYMLPKLHEEAMALPSEEEFAERKRPEQPALATFAMPDVPPAPTPAEPAAPVVAPAPKAAPATPAAPAQPGLLSRFFGALKALFSGGEETKPTEQPAPKAEAKPERQQDRRKPRQNNRRDRNERRDTRSERTEGSDNREENRRNRRQAQQQTAETRESRQQAEVTEKARTADEQQAPRRERSRRRNDDKRQAQQEAKALNVEEQSVQETEQEERVRPVQPRRKQRQLNQKVRYEQSVAEEAVVAPVVEETVAAEPIVQEAPAPRTELVKVPLPVVAQTAPEQQEENNADNRDNGGMPRRSRRSPRHLRVSGQRRRRYRDERYPTQSPMPLTVACASPELASGKVWIRYPIVRPQDVQVEEQREQEEVHVQPMVTEVPVAAAIEPVVSAPVVEEVAGVVEAPVQVAEPQPEVVETTHPEVIAAAVTEQPQVITESDVAVAQEVAEQAEPVVEPQEETADIEEVVETAEVVVAEPEVVAQPAAPVVAEVAAEVETVAAVEPEVTVEHNHATAPMTRAPAPEYVPEAPRHSDWQRPTFAFEGKGAAGGHTATHHASAAPARPQPVE.

Positions 39–119 (ANIYKGKITR…GNKGAALTTF (81 aa)) constitute an S1 motif domain. The segment at 57-112 (FVDYGAERHGFLPLKEIAREYFPANYSAHGRPNIKDVLREGQEVIVQIDKEERGNK) is interaction with RNA. Positions 169–170 (RT) are interaction with RNA 5'-terminal monophosphate. Residues Asp303 and Asp346 each coordinate Mg(2+). Residues Cys404 and Cys407 each coordinate Zn(2+). The interval 404–407 (CPRC) is required for zinc-mediated homotetramerization and catalytic activity. Disordered regions lie at residues 532–565 (FAMPDVPPAPTPAEPAAPVVAPAPKAAPATPAAP), 586–731 (EETK…KVRY), and 752–822 (EPIV…RYPT). Positions 536–546 (DVPPAPTPAEP) are enriched in pro residues. Positions 547 to 565 (AAPVVAPAPKAAPATPAAP) are enriched in low complexity. 3 stretches are compositionally biased toward basic and acidic residues: residues 598–608 (AEAKPERQQDR), 615–640 (NRRDRNERRDTRSERTEGSDNREENR), and 652–690 (ETRESRQQAEVTEKARTADEQQAPRRERSRRRNDDKRQA). Over residues 796–814 (RRSRRSPRHLRVSGQRRRR) the composition is skewed to basic residues. Positions 833–850 (ASPELASGKVWIRYPIVR) are interaction with enolase. The interaction with PNPase stretch occupies residues 1021–1061 (EAPRHSDWQRPTFAFEGKGAAGGHTATHHASAAPARPQPVE). The disordered stretch occupies residues 1031 to 1061 (PTFAFEGKGAAGGHTATHHASAAPARPQPVE). The segment covering 1043–1055 (GHTATHHASAAPA) has biased composition (low complexity).

It belongs to the RNase E/G family. RNase E subfamily. In terms of assembly, component of the RNA degradosome, which is a multiprotein complex involved in RNA processing and mRNA degradation. Within the RNA degradosome, RNase E assembles into a homotetramer formed by a dimer of dimers. Tetramerization is essential for catalytic activity, but not for RNA-binding. Interacts with RhlB, PNPase (pnp) and enolase (eno). Interacts with DeaD at reduced temperature. Requires Zn(2+) as cofactor. Mg(2+) is required as a cofactor.

The protein resides in the cytoplasm. It localises to the cell inner membrane. The enzyme catalyses Endonucleolytic cleavage of single-stranded RNA in A- and U-rich regions.. The presence of a 5'-monophosphate on substrate RNA accelerates its cleavage by catalytically activating the enzyme. Binding to the membrane stabilizes protein structure and increases affinity for the substrate. In terms of biological role, endoribonuclease that plays a central role in RNA processing and decay. Required for the maturation of 5S and 16S rRNAs and the majority of tRNAs. Also involved in the degradation of most mRNAs. Can also process other RNA species, such as RNAI, a molecule that controls the replication of ColE1 plasmid, and the cell division inhibitor DicF-RNA. It initiates the decay of RNAs by cutting them internally near their 5'-end. It is able to remove poly(A) tails by an endonucleolytic process. Required to initiate rRNA degradation during both starvation and quality control; acts after RNase PH (rph) exonucleolytically digests the 3'-end of the 16S rRNA. Degradation of 16S rRNA leads to 23S rRNA degradation. Processes the 3 tRNA(Pro) precursors immediately after the 3'-CCA to generate the mature ends. Its function is as follows. Prefers 5'-monophosphorylated substrates over 5'-triphosphorylated substrates. 5'-monophosphate-assisted cleavage requires at least 2 and preferably 3 or more unpaired 5'-terminal nucleotides. The optimal spacing between the 5' end and the scissile phosphate appears to be 8 nucleotides. Any sequence of unpaired nucleotides at the 5'-end is tolerated. The polypeptide is Ribonuclease E (Escherichia coli (strain K12)).